A 48-amino-acid chain; its full sequence is uncharacterized protein (48 aa).

The disordered stretch occupies residues 1–48 (MTKIPINIPATSGKIKFGITPSSNKSPSLSPSPSNGQLGGGRGYILEP). Residues 21–36 (PSSNKSPSLSPSPSNG) are compositionally biased toward low complexity. The span at 37–48 (QLGGGRGYILEP) shows a compositional bias: gly residues.

This is an uncharacterized protein from Dictyostelium discoideum (Social amoeba).